Reading from the N-terminus, the 201-residue chain is Probable nicotinate-nucleotide adenylyltransferase (201 aa).

The protein belongs to the NadD family.

It carries out the reaction nicotinate beta-D-ribonucleotide + ATP + H(+) = deamido-NAD(+) + diphosphate. It participates in cofactor biosynthesis; NAD(+) biosynthesis; deamido-NAD(+) from nicotinate D-ribonucleotide: step 1/1. In terms of biological role, catalyzes the reversible adenylation of nicotinate mononucleotide (NaMN) to nicotinic acid adenine dinucleotide (NaAD). This chain is Probable nicotinate-nucleotide adenylyltransferase, found in Clostridium botulinum (strain Kyoto / Type A2).